Reading from the N-terminus, the 373-residue chain is ATP phosphoribosyltransferase regulatory subunit (373 aa).

Belongs to the class-II aminoacyl-tRNA synthetase family. HisZ subfamily. As to quaternary structure, heteromultimer composed of HisG and HisZ subunits.

It is found in the cytoplasm. Its pathway is amino-acid biosynthesis; L-histidine biosynthesis; L-histidine from 5-phospho-alpha-D-ribose 1-diphosphate: step 1/9. Its function is as follows. Required for the first step of histidine biosynthesis. May allow the feedback regulation of ATP phosphoribosyltransferase activity by histidine. The protein is ATP phosphoribosyltransferase regulatory subunit of Rhizobium leguminosarum bv. trifolii (strain WSM2304).